The following is a 547-amino-acid chain: Inositol 1,4,5-trisphosphate receptor-interacting protein (547 aa).

The N-terminal stretch at 1-15 is a signal peptide; that stretch reads MAMGLFRVCLVVVTA. The Extracellular portion of the chain corresponds to 16–83; sequence IINHPLLFPR…EEGRQQNETR (68 aa). Asn-27 and Asn-80 each carry an N-linked (GlcNAc...) asparagine glycan. A coiled-coil region spans residues 32 to 82; that stretch reads ENEEEIIRKMQAHQEKLQLEQLRLEEEVARLAAEKEALEQVAEEGRQQNET. The chain crosses the membrane as a helical span at residues 84–100; it reads VAWDLWSTLCMILFLMI. Residues 101–547 lie on the Cytoplasmic side of the membrane; the sequence is EVWRQDHQEG…VPSDQPTPKS (447 aa). Residues 109-129 are disordered; that stretch reads EGPSPECLGGEEDELPGLGGA. Ser-547 bears the Phosphoserine mark.

This sequence belongs to the ITPRIP family. Interacts with ITPR. Detected in brain where it is concentrated in cerebellar Purkinje cells (at protein level).

The protein resides in the cell membrane. Its subcellular location is the nucleus outer membrane. Its function is as follows. Enhances Ca(2+)-mediated inhibition of inositol 1,4,5-triphosphate receptor (ITPR) Ca(2+) release. The sequence is that of Inositol 1,4,5-trisphosphate receptor-interacting protein (ITPRIP) from Homo sapiens (Human).